The chain runs to 36 residues: uncharacterized protein (36 aa).

A compositionally biased stretch (polar residues) spans 1–14 (MNQLGSGPTKQGVA). The tract at residues 1–36 (MNQLGSGPTKQGVATNTGSTGTTKNNSNLSGKGWVL) is disordered. Residues 15–36 (TNTGSTGTTKNNSNLSGKGWVL) are compositionally biased toward low complexity.

This is an uncharacterized protein from Dictyostelium discoideum (Social amoeba).